The chain runs to 416 residues: Enterobactin exporter EntS (416 aa).

The Cytoplasmic segment spans residues 1–21 (MNKQSWLLNLSLLKTHPAFRA). The helical transmembrane segment at 22 to 42 (VFLARFISIVSLGLLGVAVPV) threads the bilayer. The Periplasmic portion of the chain corresponds to 43–55 (QIQIMTHSTWQVG). Residues 56-76 (LSVTLTGGAMFVGLMVGGVLA) form a helical membrane-spanning segment. Over 77–83 (DRYERKK) the chain is Cytoplasmic. Residues 84 to 104 (VILLARGTCGIGFIGLCLNAL) traverse the membrane as a helical segment. Residues 105-109 (LPEPS) lie on the Periplasmic side of the membrane. The helical transmembrane segment at 110 to 130 (LLAIYLLGLWDGFFASLGVTA) threads the bilayer. Residues 131-156 (LLAATPALVGRENLMQAGAITMLTVR) lie on the Cytoplasmic side of the membrane. A helical transmembrane segment spans residues 157–177 (LGSVISPMIGGLLLATGGVAW). N178 is a topological domain (periplasmic). The chain crosses the membrane as a helical span at residues 179–199 (YGLAAAGTFITLLPLLSLPAL). The Cytoplasmic segment spans residues 200–218 (PPPPQPREHPLKSLLAGFR). The chain crosses the membrane as a helical span at residues 219-239 (FLLASPLVGGIALLGGLLTMA). Residues 240 to 256 (SAVRVLYPALADNWQMS) are Periplasmic-facing. A helical transmembrane segment spans residues 257-277 (AAQIGFLYAAIPLGAAIGALT). Residues 278–287 (SGKLAHSVRP) are Cytoplasmic-facing. The chain crosses the membrane as a helical span at residues 288–307 (GLLMLLSTLGAFLAIGLFGL). Over 308–313 (MPMWIL) the chain is Periplasmic. Residues 314 to 336 (GVVCLALFGWLSAVSSLLQYTML) traverse the membrane as a helical segment. Over 337–356 (QTQTPEAMLGRINGLWTAQN) the chain is Cytoplasmic. The helical transmembrane segment at 357–377 (VTGDAIGAALLGGLGAMMTPV) threads the bilayer. Position 378 (A378) is a topological domain, periplasmic. The helical transmembrane segment at 379–399 (SASASGFGLLIIGVLLLLVLV) threads the bilayer. The Cytoplasmic portion of the chain corresponds to 400–416 (ELRRFRQTPPQVTASDS).

It belongs to the major facilitator superfamily. EntS (TC 2.A.1.38) family.

The protein localises to the cell inner membrane. In terms of biological role, component of an export pathway for enterobactin. The sequence is that of Enterobactin exporter EntS from Escherichia coli O127:H6 (strain E2348/69 / EPEC).